The following is a 162-amino-acid chain: Protein-export protein SecB (162 aa).

This sequence belongs to the SecB family. In terms of assembly, homotetramer, a dimer of dimers. One homotetramer interacts with 1 SecA dimer.

The protein localises to the cytoplasm. In terms of biological role, one of the proteins required for the normal export of preproteins out of the cell cytoplasm. It is a molecular chaperone that binds to a subset of precursor proteins, maintaining them in a translocation-competent state. It also specifically binds to its receptor SecA. This chain is Protein-export protein SecB, found in Hamiltonella defensa subsp. Acyrthosiphon pisum (strain 5AT).